Consider the following 347-residue polypeptide: L-threonine 3-dehydrogenase (347 aa).

C42 is a binding site for Zn(2+). Active-site charge relay system residues include T44 and H47. 6 residues coordinate Zn(2+): H67, E68, C97, C100, C103, and C111. Residues I180, D200, R205, 267-269 (LSL), and 292-293 (IT) contribute to the NAD(+) site.

The protein belongs to the zinc-containing alcohol dehydrogenase family. As to quaternary structure, homotetramer. It depends on Zn(2+) as a cofactor.

Its subcellular location is the cytoplasm. It carries out the reaction L-threonine + NAD(+) = (2S)-2-amino-3-oxobutanoate + NADH + H(+). It participates in amino-acid degradation; L-threonine degradation via oxydo-reductase pathway; glycine from L-threonine: step 1/2. Its function is as follows. Catalyzes the NAD(+)-dependent oxidation of L-threonine to 2-amino-3-ketobutyrate. The chain is L-threonine 3-dehydrogenase from Bacillus velezensis (strain DSM 23117 / BGSC 10A6 / LMG 26770 / FZB42) (Bacillus amyloliquefaciens subsp. plantarum).